Consider the following 178-residue polypeptide: ATP-dependent protease subunit HslV (178 aa).

T2 is an active-site residue. Na(+) is bound by residues G157, C160, and T163.

It belongs to the peptidase T1B family. HslV subfamily. A double ring-shaped homohexamer of HslV is capped on each side by a ring-shaped HslU homohexamer. The assembly of the HslU/HslV complex is dependent on binding of ATP.

The protein resides in the cytoplasm. The catalysed reaction is ATP-dependent cleavage of peptide bonds with broad specificity.. Its activity is regulated as follows. Allosterically activated by HslU binding. Its function is as follows. Protease subunit of a proteasome-like degradation complex believed to be a general protein degrading machinery. This Hamiltonella defensa subsp. Acyrthosiphon pisum (strain 5AT) protein is ATP-dependent protease subunit HslV.